A 748-amino-acid chain; its full sequence is Serine/threonine-protein kinase CG17528 (748 aa).

2 stretches are compositionally biased toward polar residues: residues 22–35 and 47–59; these read QASP…SVPS and EKTN…QEDN. Disordered regions lie at residues 22 to 41 and 47 to 81; these read QASP…NVVT and EKTN…ELDD. A phosphoserine mark is found at Ser-67, Ser-70, Ser-73, Ser-87, Ser-88, and Ser-89. Position 91 is a phosphothreonine (Thr-91). Phosphoserine is present on Ser-93. Thr-100 is subject to Phosphothreonine. Doublecortin domains lie at 158 to 244 and 313 to 396; these read LRIK…VEYN and RIVT…AEDF. The Protein kinase domain maps to 477-735; that stretch reads YSLGRIIGDG…SEDILDHSWT (259 aa). Residues 483–491 and Lys-506 each bind ATP; that span reads IGDGNFAIV. The active-site Proton acceptor is the Asp-598.

Belongs to the protein kinase superfamily. CAMK Ser/Thr protein kinase family. CaMK subfamily.

It carries out the reaction L-seryl-[protein] + ATP = O-phospho-L-seryl-[protein] + ADP + H(+). It catalyses the reaction L-threonyl-[protein] + ATP = O-phospho-L-threonyl-[protein] + ADP + H(+). The polypeptide is Serine/threonine-protein kinase CG17528 (Drosophila melanogaster (Fruit fly)).